We begin with the raw amino-acid sequence, 169 residues long: Ribosome maturation factor RimM (169 aa).

Positions 94–168 (DDEFYHADLI…RIVADPPEGL (75 aa)) constitute a PRC barrel domain.

Belongs to the RimM family. In terms of assembly, binds ribosomal protein uS19.

Its subcellular location is the cytoplasm. Functionally, an accessory protein needed during the final step in the assembly of 30S ribosomal subunit, possibly for assembly of the head region. Essential for efficient processing of 16S rRNA. May be needed both before and after RbfA during the maturation of 16S rRNA. It has affinity for free ribosomal 30S subunits but not for 70S ribosomes. This chain is Ribosome maturation factor RimM, found in Cereibacter sphaeroides (strain ATCC 17025 / ATH 2.4.3) (Rhodobacter sphaeroides).